A 558-amino-acid polypeptide reads, in one-letter code: uncharacterized protein (558 aa).

The interval 396-420 (SSITDNDTDNDSGATESQQTDSEND) is disordered. Residues 407-416 (SGATESQQTD) are compositionally biased toward polar residues.

This sequence belongs to the chlamydial CPn_0065/CT_288/TC_0561 family.

This is an uncharacterized protein from Chlamydia muridarum (strain MoPn / Nigg).